The sequence spans 185 residues: Large ribosomal subunit protein uL15 (185 aa).

The disordered stretch occupies residues 1-51 (MDLSSLRPAAGAVKNKKRVGRGQGSGNGTTAGKGNKGQQARSGYQKPINEG). Residues 21 to 35 (RGQGSGNGTTAGKGN) show a composition bias toward gly residues.

This sequence belongs to the universal ribosomal protein uL15 family. In terms of assembly, part of the 50S ribosomal subunit.

Functionally, binds to the 23S rRNA. The sequence is that of Large ribosomal subunit protein uL15 from Chlorobium phaeobacteroides (strain DSM 266 / SMG 266 / 2430).